Reading from the N-terminus, the 823-residue chain is DNA ligase (823 aa).

Residues 32-36 (DAEYD), 81-82 (SL), and Glu121 contribute to the NAD(+) site. Lys123 acts as the N6-AMP-lysine intermediate in catalysis. Positions 144, 181, 299, and 323 each coordinate NAD(+). Cys449, Cys452, Cys467, and Cys473 together coordinate Zn(2+). Positions 528–558 (ETADKGSSENENGDAETVSGDLSKYNTQNGK) are disordered. One can recognise a BRCT domain in the interval 746–823 (GINKAVAGKT…SEAELLTLLC (78 aa)).

This sequence belongs to the NAD-dependent DNA ligase family. LigA subfamily. Requires Mg(2+) as cofactor. Mn(2+) is required as a cofactor.

It catalyses the reaction NAD(+) + (deoxyribonucleotide)n-3'-hydroxyl + 5'-phospho-(deoxyribonucleotide)m = (deoxyribonucleotide)n+m + AMP + beta-nicotinamide D-nucleotide.. DNA ligase that catalyzes the formation of phosphodiester linkages between 5'-phosphoryl and 3'-hydroxyl groups in double-stranded DNA using NAD as a coenzyme and as the energy source for the reaction. It is essential for DNA replication and repair of damaged DNA. This Neisseria gonorrhoeae (strain NCCP11945) protein is DNA ligase.